Consider the following 235-residue polypeptide: Serine protease SplA (235 aa).

Positions 1–35 (MNKNVMIKGLTALTILTSLGFAENISDQPHSIAKA) are cleaved as a signal peptide. Catalysis depends on charge relay system residues H74, D113, and S189.

It belongs to the peptidase S1B family.

It is found in the secreted. The sequence is that of Serine protease SplA (splA) from Staphylococcus aureus.